We begin with the raw amino-acid sequence, 471 residues long: Protein hedgehog (471 aa).

Cys-85 is lipidated: N-palmitoyl cysteine. Ca(2+) is bound by residues Glu-149, Glu-150, Asp-155, Thr-185, Glu-186, Asp-189, and Asp-191. The Cholesterol glycine ester moiety is linked to residue Gly-257.

Belongs to the hedgehog family. As to quaternary structure, interacts with shf. Interacts with ptc and CG5504/l(2)tid. In terms of processing, the C-terminal part of the hedgehog protein precursor displays an autoproteolysis activity that results in the cleavage of the full-length protein into two parts (N-product and C-product). In addition, the C-terminal part displays a cholesterol transferase activity that results by the covalent attachment of a cholesterol moiety to the C-terminal of the newly generated N-product. The N-product is the active species in both local and long-range signaling, whereas the C-product has no signaling activity. Cholesterylation is required for N-product targeting to lipid rafts and multimerization. Post-translationally, N-palmitoylation by Rasp of the hedgehog N-product, within the secretory pathway, is required for the embryonic and larval patterning activities of the hedgehog signal. As to expression, in embryos, expression starts at stage 5 as a few stripes at the anterior and posterior ends, this expands to 17 stripes during stages 8-11. Expression is also seen in CNS and some PNS cells until stage 13-14, and in foregut, hindgut and salivary glands. In larvae, expression is seen in the posterior compartment of the wing, leg and antennal imaginal disks. In adults, high level of expression in specific regions of the proventriculus and hindgut, with slightly lower levels of expression in the posterior midgut. Relatively low levels of expression in the anterior midgut region.

The protein resides in the nucleus. It is found in the cytoplasm. It localises to the cell membrane. The enzyme catalyses glycyl-L-cysteinyl-[protein] + cholesterol + H(+) = [protein]-C-terminal glycyl cholesterol ester + N-terminal L-cysteinyl-[protein]. Its function is as follows. The C-terminal part of the hedgehog protein precursor displays an autoproteolysis activity that results in the cleavage of the full-length protein into two parts (N-product and C-product). In addition, the C-terminal part displays a cholesterol transferase activity that results by the covalent attachment of a cholesterol moiety to the C-terminal of the newly generated N-product. Once cleaved, the C-product has no signaling activity and diffuses from the cell. In terms of biological role, the dually lipidated hedgehog protein N-product is a morphogen which is essential for a variety of patterning events during development. Establishes the anterior-posterior axis of the embryonic segments and patterns the larval imaginal disks. Binds to the patched (ptc) receptor, which functions in association with smoothened (smo), to activate the transcription of target genes wingless (wg), decapentaplegic (dpp) and ptc. In the absence of hh, ptc represses the constitutive signaling activity of smo through fused (fu). Essential component of a signaling pathway which regulates the Duox-dependent gut immune response to bacterial uracil; required to activate Cad99C-dependent endosome formation, norpA-dependent Ca2+ mobilization and p38 MAPK, which are essential steps in the Duox-dependent production of reactive oxygen species (ROS) in response to intestinal bacterial infection. During photoreceptor differentiation, it up-regulates transcription of Ubr3, which in turn promotes the hh-signaling pathway by mediating the ubiquitination and degradation of cos. This chain is Protein hedgehog, found in Drosophila melanogaster (Fruit fly).